The following is a 293-amino-acid chain: Putative ribose uptake protein RbsU (293 aa).

The next 10 membrane-spanning stretches (helical) occupy residues alanine 5–serine 24, isoleucine 34–phenylalanine 51, glycine 58–phenylalanine 80, threonine 95–tryptophan 114, isoleucine 121–valine 138, serine 153–alanine 170, isoleucine 177–leucine 199, valine 212–alanine 234, leucine 241–leucine 263, and methionine 273–isoleucine 292.

This sequence belongs to the GRP transporter (TC 2.A.7.5) family.

The protein resides in the cell membrane. Its function is as follows. Could be involved in the uptake of ribose. This is Putative ribose uptake protein RbsU (rbsU) from Staphylococcus epidermidis (strain ATCC 12228 / FDA PCI 1200).